The sequence spans 473 residues: Aspartyl/glutamyl-tRNA(Asn/Gln) amidotransferase subunit B (473 aa).

It belongs to the GatB/GatE family. GatB subfamily. In terms of assembly, heterotrimer of A, B and C subunits.

It catalyses the reaction L-glutamyl-tRNA(Gln) + L-glutamine + ATP + H2O = L-glutaminyl-tRNA(Gln) + L-glutamate + ADP + phosphate + H(+). The catalysed reaction is L-aspartyl-tRNA(Asn) + L-glutamine + ATP + H2O = L-asparaginyl-tRNA(Asn) + L-glutamate + ADP + phosphate + 2 H(+). Its function is as follows. Allows the formation of correctly charged Asn-tRNA(Asn) or Gln-tRNA(Gln) through the transamidation of misacylated Asp-tRNA(Asn) or Glu-tRNA(Gln) in organisms which lack either or both of asparaginyl-tRNA or glutaminyl-tRNA synthetases. The reaction takes place in the presence of glutamine and ATP through an activated phospho-Asp-tRNA(Asn) or phospho-Glu-tRNA(Gln). This is Aspartyl/glutamyl-tRNA(Asn/Gln) amidotransferase subunit B from Francisella tularensis subsp. novicida (strain U112).